The primary structure comprises 225 residues: NAD(P)H-quinone oxidoreductase subunit K, chloroplastic (225 aa).

[4Fe-4S] cluster-binding residues include C43, C44, C108, and C139.

Belongs to the complex I 20 kDa subunit family. NDH is composed of at least 16 different subunits, 5 of which are encoded in the nucleus. It depends on [4Fe-4S] cluster as a cofactor.

The protein resides in the plastid. It localises to the chloroplast thylakoid membrane. The catalysed reaction is a plastoquinone + NADH + (n+1) H(+)(in) = a plastoquinol + NAD(+) + n H(+)(out). The enzyme catalyses a plastoquinone + NADPH + (n+1) H(+)(in) = a plastoquinol + NADP(+) + n H(+)(out). Functionally, NDH shuttles electrons from NAD(P)H:plastoquinone, via FMN and iron-sulfur (Fe-S) centers, to quinones in the photosynthetic chain and possibly in a chloroplast respiratory chain. The immediate electron acceptor for the enzyme in this species is believed to be plastoquinone. Couples the redox reaction to proton translocation, and thus conserves the redox energy in a proton gradient. The sequence is that of NAD(P)H-quinone oxidoreductase subunit K, chloroplastic from Lobularia maritima (Sweet alyssum).